A 249-amino-acid polypeptide reads, in one-letter code: Olfactory receptor 1571 (249 aa).

A helical transmembrane segment spans residues 1–9 (LLMCNLCFA). Over 10-40 (DICFTSASIPTNLVNIQTKNKVITYEGCISQ) the chain is Extracellular. Residues C37 and C119 are joined by a disulfide bond. A helical membrane pass occupies residues 41 to 60 (VYFFILFGVLDNFLLAVMAY). Residues 61 to 82 (DRYVAICHPLHYTVIMNRRLCG) lie on the Cytoplasmic side of the membrane. The helical transmembrane segment at 83-103 (LLVLGSWVTTALNSLLQSSMA) threads the bilayer. Residues 104-136 (LRLSFCTDLKIPHFVCELNQLVLLACNDTFPND) are Extracellular-facing. N130 is a glycosylation site (N-linked (GlcNAc...) asparagine). The chain crosses the membrane as a helical span at residues 137–158 (MVMYFAAVLLGGGPLAGILYSY). Topologically, residues 159-180 (SKIVSSIRAISSSQGKYKAFST) are cytoplasmic. The helical transmembrane segment at 181 to 200 (CASHLSVVSLFYSTLLGVYL) threads the bilayer. The Extracellular portion of the chain corresponds to 201–210 (SSSFTQNSHS). The chain crosses the membrane as a helical span at residues 211–232 (TARASVMYSVVTPMLNPFIYSL). Over 233–249 (RNKDLMGALRRLFRRKP) the chain is Cytoplasmic.

Belongs to the G-protein coupled receptor 1 family. In terms of tissue distribution, tongue specific.

It localises to the cell membrane. Functionally, possible taste receptor. The polypeptide is Olfactory receptor 1571 (Olr1571) (Rattus norvegicus (Rat)).